A 211-amino-acid chain; its full sequence is Urease accessory protein UreG (211 aa).

Position 11 to 18 (11 to 18) interacts with GTP; sequence GPVGSGKT.

The protein belongs to the SIMIBI class G3E GTPase family. UreG subfamily. In terms of assembly, homodimer. UreD, UreF and UreG form a complex that acts as a GTP-hydrolysis-dependent molecular chaperone, activating the urease apoprotein by helping to assemble the nickel containing metallocenter of UreC. The UreE protein probably delivers the nickel.

Its subcellular location is the cytoplasm. Its function is as follows. Facilitates the functional incorporation of the urease nickel metallocenter. This process requires GTP hydrolysis, probably effectuated by UreG. The protein is Urease accessory protein UreG of Laribacter hongkongensis (strain HLHK9).